A 299-amino-acid polypeptide reads, in one-letter code: MSAKPEVSLVREASRQIVAGGSAGLVEICLMHPLDVVKTRFQIQRCATDPNSYKSLVDSFRMIFQMEGLFGFYKGILPPILAETPKRAVKFFTFEQYKKLLGYVSLSPALTFAIAGLGSGLTEAIVVNPFEVVKVGLQANRNTFAEQPSTVGYARQIIKKEGWGLQGLNKGLTATLGRHGVFNMVYFGFYYNVKNMIPVNKDPILEFWRKFGIGLLSGTIASVINIPFDVAKSRIQGPQPVPGEIKYRTCFKTMATVYQEEGILALYKGLLPKIMRLGPGGAVMLLVYEYTYSWLQENW.

3 Solcar repeats span residues 11–100 (REAS…YKKL), 107–196 (SPAL…VKNM), and 205–294 (LEFW…TYSW). The next 6 helical transmembrane spans lie at 17 to 37 (IVAG…LDVV), 70 to 89 (FGFY…KRAV), 113 to 133 (AIAG…FEVV), 167 to 187 (GLNK…MVYF), 205 to 225 (LEFW…SVIN), and 277 to 297 (LGPG…WLQE).

This sequence belongs to the mitochondrial carrier (TC 2.A.29) family. In terms of tissue distribution, expressed in placenta, gall bladder and colon.

It localises to the mitochondrion inner membrane. The catalysed reaction is 2-oxoadipate(in) + 2-oxoglutarate(out) = 2-oxoadipate(out) + 2-oxoglutarate(in). The enzyme catalyses hexanedioate(in) + 2-oxoglutarate(out) = hexanedioate(out) + 2-oxoglutarate(in). It catalyses the reaction L-2-aminoadipate(in) + 2-oxoglutarate(out) = L-2-aminoadipate(out) + 2-oxoglutarate(in). It carries out the reaction glutarate(in) + 2-oxoglutarate(out) = glutarate(out) + 2-oxoglutarate(in). The catalysed reaction is 2-oxoheptanedioate(in) + 2-oxoglutarate(out) = 2-oxoheptanedioate(out) + 2-oxoglutarate(in). The enzyme catalyses heptanedioate(in) + 2-oxoglutarate(out) = heptanedioate(out) + 2-oxoglutarate(in). It catalyses the reaction citrate(in) + 2-oxoglutarate(out) = citrate(out) + 2-oxoglutarate(in). Transports dicarboxylates across the inner membranes of mitochondria by a counter-exchange mechanism. Can transport 2-oxoadipate (2-oxohexanedioate), 2-oxoglutarate, adipate (hexanedioate), glutarate, and to a lesser extent, pimelate (heptanedioate), 2-oxopimelate (2-oxoheptanedioate), 2-aminoadipate (2-aminohexanedioate), oxaloacetate, and citrate. Plays a central role in catabolism of lysine, hydroxylysine, and tryptophan, by transporting common metabolite intermediates (such as 2-oxoadipate) into the mitochondria, where it is converted into acetyl-CoA and can enter the citric acid (TCA) cycle. This is Mitochondrial 2-oxodicarboxylate carrier (SLC25A21) from Homo sapiens (Human).